Reading from the N-terminus, the 590-residue chain is MNIGRLVWNEDDKAIVASLLGKRALDYLLSNSVSNANLLMTLGSDENLQNKLSDLVERPNASNFSWNYAIFWQISRSKAGDLVLCWGDGYCREPKEGEKSEIVRILSMGREEETHQTMRKRVLQKLHDLFGGSEEENCALGLDRVTDTEMFLLSSMYFSFPRGEGGPGKCFASAKPVWLSDVVNSGSDYCVRSFLAKSAGIQTVVLVPTDLGVVELGSTSCLPESEDSILSIRSLFTSSLPPVRAVALPVTVAEKIDDNRTKIFGKDLHNSGFLQHHQHHQQQQQQPPQQQQHRQFREKLTVRKMDDRAPKRLDAYPNNGNRFMFSNPGTNNNTLLSPTWVQPENYTRPINVKEVPSTDEFKFLPLQQSSQRLLPPAQMQIDFSAASSRASENNSDGEGGGEWADAVGADESGNNRPRKRGRRPANGRAEALNHVEAERQRREKLNQRFYALRSVVPNISKMDKASLLGDAVSYINELHAKLKVMEAERERLGYSSNPPISLDSDINVQTSGEDVTVRINCPLESHPASRIFHAFEESKVEVINSNLEVSQDTVLHTFVVKSEELTKEKLISALSREQTNSVQSRTSSGR.

Disordered stretches follow at residues 274-296 (LQHHQHHQQQQQQPPQQQQHRQF) and 385-439 (AASS…EAER). Low complexity predominate over residues 281-293 (QQQQQQPPQQQQH). A compositionally biased stretch (basic residues) spans 416 to 425 (RPRKRGRRPA). The region spanning 429–478 (AEALNHVEAERQRREKLNQRFYALRSVVPNISKMDKASLLGDAVSYINEL) is the bHLH domain.

In terms of assembly, homodimer.

Its subcellular location is the nucleus. This is Transcription factor bHLH13 (BHLH13) from Arabidopsis thaliana (Mouse-ear cress).